The primary structure comprises 400 residues: DNA polymerase IV (400 aa).

Residues 8-191 (ILLCDANSFF…LPVRELFGIG (184 aa)) form the UmuC domain. Mg(2+) is bound by residues aspartate 12 and aspartate 109. Glutamate 110 is an active-site residue.

This sequence belongs to the DNA polymerase type-Y family. As to quaternary structure, monomer. Mg(2+) is required as a cofactor.

The protein localises to the cytoplasm. It catalyses the reaction DNA(n) + a 2'-deoxyribonucleoside 5'-triphosphate = DNA(n+1) + diphosphate. Functionally, poorly processive, error-prone DNA polymerase involved in untargeted mutagenesis. Copies undamaged DNA at stalled replication forks, which arise in vivo from mismatched or misaligned primer ends. These misaligned primers can be extended by PolIV. Exhibits no 3'-5' exonuclease (proofreading) activity. May be involved in translesional synthesis, in conjunction with the beta clamp from PolIII. The chain is DNA polymerase IV from Moorella thermoacetica (strain ATCC 39073 / JCM 9320).